The sequence spans 476 residues: 3-isopropylmalate dehydratase large subunit (476 aa).

Residues C357, C417, and C420 each coordinate [4Fe-4S] cluster.

It belongs to the aconitase/IPM isomerase family. LeuC type 1 subfamily. Heterodimer of LeuC and LeuD. [4Fe-4S] cluster serves as cofactor.

It carries out the reaction (2R,3S)-3-isopropylmalate = (2S)-2-isopropylmalate. The protein operates within amino-acid biosynthesis; L-leucine biosynthesis; L-leucine from 3-methyl-2-oxobutanoate: step 2/4. Functionally, catalyzes the isomerization between 2-isopropylmalate and 3-isopropylmalate, via the formation of 2-isopropylmaleate. This chain is 3-isopropylmalate dehydratase large subunit, found in Mycolicibacterium paratuberculosis (strain ATCC BAA-968 / K-10) (Mycobacterium paratuberculosis).